A 205-amino-acid chain; its full sequence is Golgi apparatus membrane protein TVP23 homolog B (205 aa).

The residue at position 1 (Met1) is an N-acetylmethionine. The disordered stretch occupies residues 1 to 21 (MLQQDSNDDTEDVSLFDAEEE). Transmembrane regions (helical) follow at residues 34–53 (PVAS…VYLL), 54–72 (CELL…ILLL), 126–146 (IFWL…FSAL), and 152–172 (KWLA…YGYI).

This sequence belongs to the TVP23 family.

It localises to the membrane. This chain is Golgi apparatus membrane protein TVP23 homolog B (TVP23B), found in Pongo abelii (Sumatran orangutan).